We begin with the raw amino-acid sequence, 328 residues long: Gonadotropin-releasing hormone receptor (328 aa).

The Extracellular portion of the chain corresponds to 1-38 (MANSASPEQNQNHCSAINSSILLTQGNLPTLTLSGKIR). An N-linked (GlcNAc...) asparagine glycan is attached at Asn18. Residues 39–58 (VTVTFFLFLLSTAFNASFLL) traverse the membrane as a helical segment. Residues 59 to 77 (KLQKWTQRKEKGKKLSRMK) lie on the Cytoplasmic side of the membrane. The chain crosses the membrane as a helical span at residues 78-97 (VLLKHLTLANLLETLIVMPL). Over 98–115 (DGMWNITVQWYAGEFLCK) the chain is Extracellular. An N-linked (GlcNAc...) asparagine glycan is attached at Asn102. Cys114 and Cys196 are oxidised to a cystine. Residues 116-137 (VLSYLKLFSMYAPAFMMVVISL) form a helical membrane-spanning segment. Over 138-164 (DRSLAITRPLAVKSNSRLGRFMIGLAW) the chain is Cytoplasmic. The chain crosses the membrane as a helical span at residues 165–184 (LLSSIFAGPQLYIFRMIHLA). Residues 185–212 (DSSGQTEGFSQCVTHGSFPQWWHQAFYN) lie on the Extracellular side of the membrane. The chain crosses the membrane as a helical span at residues 213-232 (FFTFSCLFIIPLLIMLICNA). At 233–281 (KIMFTLTRVLQQDPHNLQLNQSKNNIPRARLRTLKMTVAFAASFIVCWT) the chain is on the cytoplasmic side. Residues 282–300 (PYYVLGIWYWFDPEMVNRV) traverse the membrane as a helical segment. The Extracellular portion of the chain corresponds to 301–306 (SDPVNH). The chain crosses the membrane as a helical span at residues 307 to 326 (FFFLFAFLNPCFDPLIYGYF). The Cytoplasmic portion of the chain corresponds to 327-328 (SL).

Belongs to the G-protein coupled receptor 1 family. As to expression, pituitary gland.

It localises to the cell membrane. Functionally, receptor for gonadotropin releasing hormone (GnRH) that mediates the action of GnRH to stimulate the secretion of the gonadotropic hormones luteinizing hormone (LH) and follicle-stimulating hormone (FSH). This receptor mediates its action by association with G-proteins that activate a phosphatidylinositol-calcium second messenger system. This Sus scrofa (Pig) protein is Gonadotropin-releasing hormone receptor (GNRHR).